A 615-amino-acid polypeptide reads, in one-letter code: Medium-chain acyl-CoA ligase ACSF2, mitochondrial (615 aa).

The transit peptide at 1-41 (MAVYHGMLRFGRLCIASLGARGPRTLLSRPRPNSKLQSVRA) directs the protein to the mitochondrion. N6-acetyllysine is present on Lys-179. The residue at position 182 (Lys-182) is an N6-acetyllysine; alternate. At Lys-182 the chain carries N6-succinyllysine; alternate. Position 199 is an N6-acetyllysine (Lys-199). An ATP-binding site is contributed by 263–271 (TSGTTGNPK). N6-acetyllysine is present on residues Lys-340 and Lys-398. Lys-478 carries the post-translational modification N6-succinyllysine. 2 residues coordinate ATP: Asp-493 and Arg-508. Lys-510 bears the N6-acetyllysine mark. N6-acetyllysine; alternate occurs at positions 544 and 570. N6-succinyllysine; alternate is present on residues Lys-544 and Lys-570. Position 599 (Lys-599) interacts with ATP. Lys-599 bears the N6-succinyllysine mark.

Belongs to the ATP-dependent AMP-binding enzyme family.

It localises to the mitochondrion. It catalyses the reaction a medium-chain fatty acid + ATP + CoA = a medium-chain fatty acyl-CoA + AMP + diphosphate. The catalysed reaction is octanoate + ATP + CoA = octanoyl-CoA + AMP + diphosphate. Functionally, acyl-CoA synthases catalyze the initial reaction in fatty acid metabolism, by forming a thioester with CoA. Has some preference toward medium-chain substrates. Plays a role in adipocyte differentiation. This is Medium-chain acyl-CoA ligase ACSF2, mitochondrial from Mus musculus (Mouse).